A 259-amino-acid polypeptide reads, in one-letter code: MEDVQNSPAQVAMPIDRVGVKNLKLPLVVRDRAQGSQHTVATVDIGVDLPAEFKGTHMSRFVEALENWSEELDYNSMKRLLEDVKERLHARKAYALFRFPYFVRKGAPATASSGLVWYECRLTGELGDGKPSFLLELEVPVMTVCPCSKAISDEGAHSQRAVVRMSIRMTGFSWMEEFIDLAEAAGSSPVYTLLKREDEKFVTEDAFAHPTFVEDVVRAAAQRLEGHPHVAWFRVEVESFESIHCHNAFASIEREVRKG.

The protein belongs to the GTP cyclohydrolase IV family.

The catalysed reaction is GTP + H2O = 7,8-dihydroneopterin 3'-triphosphate + formate + H(+). The protein operates within cofactor biosynthesis; 7,8-dihydroneopterin triphosphate biosynthesis; 7,8-dihydroneopterin triphosphate from GTP: step 1/1. Converts GTP to 7,8-dihydroneopterin triphosphate. This Nitratidesulfovibrio vulgaris (strain DSM 19637 / Miyazaki F) (Desulfovibrio vulgaris) protein is GTP cyclohydrolase FolE2.